Consider the following 147-residue polypeptide: Protein SPMIP3 (147 aa).

This is Protein SPMIP3 from Homo sapiens (Human).